The primary structure comprises 332 residues: Super small secreted glycoprotein (332 aa).

The first 33 residues, 1–33 (MGSGYQLLQLPRERFRKTSFLVWVIILFQRAIS), serve as a signal peptide directing secretion. The N-linked (GlcNAc...) asparagine; by host glycan is linked to asparagine 41. Cystine bridges form between cysteine 109–cysteine 136 and cysteine 122–cysteine 148. Asparagine 205, asparagine 229, asparagine 239, asparagine 258, and asparagine 269 each carry an N-linked (GlcNAc...) asparagine; by host glycan.

Belongs to the filoviruses glycoprotein family.

It localises to the secreted. In Reston ebolavirus (strain Reston-89) (REBOV), this protein is Super small secreted glycoprotein (GP).